The sequence spans 1687 residues: Zinc finger protein 142 (1687 aa).

2 disordered regions span residues 1-23 (MTDP…LCPE) and 83-150 (TLTP…RLEG). Over residues 125-140 (KEEKSDTQKDSQKAVD) the composition is skewed to basic and acidic residues. Phosphoserine is present on S154. C2H2-type zinc fingers lie at residues 163–185 (HMCP…LHLH), 219–242 (HHCP…ASMH), and 253–275 (YACP…LKSH). The C2H2-type 4; atypical zinc finger occupies 286–311 (LRCFQEGCSYAAPDRKAFIKHLKETH). C2H2-type zinc fingers lie at residues 316-340 (VECR…HKSH), 343-366 (FHCP…KQGH), 372-395 (LRCT…GKMH), 401-423 (HQCP…MLLH), 429-451 (HKCE…MLTH), 457-479 (YMCT…MRKH), 485-507 (YQCN…KLRH), 512-536 (LMCE…SQHH), 544-567 (YPCH…NCKH), and 573-596 (FHCA…RKAH). K594 participates in a covalent cross-link: Glycyl lysine isopeptide (Lys-Gly) (interchain with G-Cter in SUMO2). Disordered stretches follow at residues 613–690 (EPEG…EVEE), 704–798 (LESV…PPLP), 897–935 (KGLP…EAEL), 947–1014 (REPE…SPTE), and 1052–1092 (GRGG…GDGD). Low complexity predominate over residues 725–739 (PLGLEGPDGLEGPEL). The span at 1061 to 1075 (TPQTQPDVSPLSNGD) shows a compositional bias: polar residues. A compositionally biased stretch (low complexity) spans 1082–1092 (GSTESSSGDGD). 15 C2H2-type zinc fingers span residues 1135–1158 (LHCS…KRRH), 1171–1194 (LQCG…RLKH), 1200–1222 (HQCP…QSRH), 1228–1251 (IPCS…LRVH), 1257–1280 (HFCP…NSCH), 1286–1309 (FACS…LRRH), 1328–1351 (LHCS…RKQH), 1354–1377 (LECG…RQQH), 1380–1403 (HRCQ…LEQH), 1424–1446 (LHCP…VKGH), 1452–1474 (YKCT…SRIH), 1480–1502 (YHCH…MRIH), 1508–1530 (YLCP…MTKH), 1536–1559 (YQCP…ETRH), and 1565–1587 (FMCE…LRKH). A Glycyl lysine isopeptide (Lys-Gly) (interchain with G-Cter in SUMO2) cross-link involves residue K1193. K1242 is covalently cross-linked (Glycyl lysine isopeptide (Lys-Gly) (interchain with G-Cter in SUMO2)). K1591 is covalently cross-linked (Glycyl lysine isopeptide (Lys-Gly) (interchain with G-Cter in SUMO2)). 2 consecutive C2H2-type zinc fingers follow at residues 1593-1615 (YVCN…ALTH) and 1621-1643 (FFCR…VRRH). A disordered region spans residues 1638 to 1687 (KHVRRHHPDQADPNQGVGKDPTTPTVHLHDVQLEDPSPPAPAAPHTGPEG).

The protein belongs to the krueppel C2H2-type zinc-finger protein family.

It localises to the nucleus. In terms of biological role, may be involved in transcriptional regulation. The chain is Zinc finger protein 142 from Homo sapiens (Human).